The primary structure comprises 591 residues: Aspartate--tRNA(Asp/Asn) ligase (591 aa).

L-aspartate is bound at residue E175. The tract at residues Q199–K202 is aspartate. Positions 221 and 453 each coordinate L-aspartate. R221–E223 contacts ATP. An ATP-binding site is contributed by E486. Residue R493 participates in L-aspartate binding. G538 to R541 serves as a coordination point for ATP.

The protein belongs to the class-II aminoacyl-tRNA synthetase family. Type 1 subfamily. As to quaternary structure, homodimer.

It localises to the cytoplasm. The catalysed reaction is tRNA(Asx) + L-aspartate + ATP = L-aspartyl-tRNA(Asx) + AMP + diphosphate. Functionally, aspartyl-tRNA synthetase with relaxed tRNA specificity since it is able to aspartylate not only its cognate tRNA(Asp) but also tRNA(Asn). Reaction proceeds in two steps: L-aspartate is first activated by ATP to form Asp-AMP and then transferred to the acceptor end of tRNA(Asp/Asn). This is Aspartate--tRNA(Asp/Asn) ligase from Jannaschia sp. (strain CCS1).